Reading from the N-terminus, the 394-residue chain is Elongation factor Tu 1 (394 aa).

Residues 10 to 204 enclose the tr-type G domain; it reads KPHVNVGTIG…FLDSYIPEPE (195 aa). The tract at residues 19–26 is G1; the sequence is GHVDHGKT. 19-26 provides a ligand contact to GTP; sequence GHVDHGKT. Mg(2+) is bound at residue Thr26. The segment at 60–64 is G2; that stretch reads GITIN. The segment at 81–84 is G3; sequence DCPG. GTP-binding positions include 81–85 and 136–139; these read DCPGH and NKCD. Residues 136-139 are G4; sequence NKCD. The segment at 174–176 is G5; the sequence is SAL.

It belongs to the TRAFAC class translation factor GTPase superfamily. Classic translation factor GTPase family. EF-Tu/EF-1A subfamily. Monomer.

The protein localises to the cytoplasm. It carries out the reaction GTP + H2O = GDP + phosphate + H(+). GTP hydrolase that promotes the GTP-dependent binding of aminoacyl-tRNA to the A-site of ribosomes during protein biosynthesis. The polypeptide is Elongation factor Tu 1 (Shigella sonnei (strain Ss046)).